The primary structure comprises 218 residues: RNA polymerase sigma-H factor (218 aa).

Positions Asp62–Ile75 match the Polymerase core binding motif. Residues Tyr182–Gln201 constitute a DNA-binding region (H-T-H motif).

The protein belongs to the sigma-70 factor family. As to quaternary structure, interacts transiently with the RNAP core.

Functionally, sigma factors are initiation factors that promote the attachment of RNA polymerase (RNAP) to specific initiation sites and are then released. This sigma factor is involved in the transition to post-exponential phase in the beginning of sporulation. It is also required for transcription of several stationary phase genes. Association with the RNAP core increases rapidly in early exponential phase, and reamins constant expression level after. This chain is RNA polymerase sigma-H factor (sigH), found in Bacillus subtilis (strain 168).